A 131-amino-acid chain; its full sequence is uncharacterized protein (131 aa).

A compositionally biased stretch (low complexity) spans 31-40; sequence AAATSRAAPL. The segment at 31–131 is disordered; sequence AAATSRAAPL…EAKTEQTKTP (101 aa).

This is an uncharacterized protein from Homo sapiens (Human).